Consider the following 520-residue polypeptide: Glutamate--cysteine ligase (520 aa).

It belongs to the glutamate--cysteine ligase type 1 family. Type 1 subfamily.

It catalyses the reaction L-cysteine + L-glutamate + ATP = gamma-L-glutamyl-L-cysteine + ADP + phosphate + H(+). It participates in sulfur metabolism; glutathione biosynthesis; glutathione from L-cysteine and L-glutamate: step 1/2. This is Glutamate--cysteine ligase from Leptospira interrogans serogroup Icterohaemorrhagiae serovar copenhageni (strain Fiocruz L1-130).